Reading from the N-terminus, the 93-residue chain is Small ribosomal subunit protein uS19m (93 aa).

The protein belongs to the universal ribosomal protein uS19 family. Component of the mitochondrial small ribosomal subunit (mt-SSU). Mature yeast 74S mitochondrial ribosomes consist of a small (37S) and a large (54S) subunit. The 37S small subunit contains a 15S ribosomal RNA (15S mt-rRNA) and at least 32 different proteins. The 54S large subunit contains a 21S rRNA (21S mt-rRNA) and at least 45 different proteins.

The protein resides in the mitochondrion. Functionally, component of the mitochondrial ribosome (mitoribosome), a dedicated translation machinery responsible for the synthesis of mitochondrial genome-encoded proteins, including at least some of the essential transmembrane subunits of the mitochondrial respiratory chain. The mitoribosomes are attached to the mitochondrial inner membrane and translation products are cotranslationally integrated into the membrane. This chain is Small ribosomal subunit protein uS19m (rsm19), found in Schizosaccharomyces pombe (strain 972 / ATCC 24843) (Fission yeast).